We begin with the raw amino-acid sequence, 323 residues long: Rhazimal reductase 2 (323 aa).

Aspartate 53 serves as a coordination point for NADP(+). Tyrosine 58 serves as the catalytic Proton donor. Residues serine 167–asparagine 168, glutamine 189, tryptophan 215–serine 220, and aspartate 289–arginine 297 contribute to the NADP(+) site.

This sequence belongs to the aldo/keto reductase family. As to quaternary structure, monomer.

The enzyme catalyses rhazimol + NADP(+) = rhazimal + NADPH + 2 H(+). Its pathway is alkaloid biosynthesis. Functionally, oxidoreductase involved in the biosynthesis of akuammilan monoterpene indole alkaloids (MIAs) natural products, components with various biological properties such as antidiabetic, antibacterial, anti-inflammatory, anticancer, and antimalarial activities. Catalyzes the conversion of rhazimal to rhazimol. The chain is Rhazimal reductase 2 from Alstonia scholaris (Dogbane).